We begin with the raw amino-acid sequence, 647 residues long: Protein cueball (647 aa).

An N-terminal signal peptide occupies residues 1-22 (MLWCPSVLVPLIAVAACLPVLA). Residues 23–534 (IGTPLEWEFA…CMTPSPWTSN (512 aa)) are Extracellular-facing. N-linked (GlcNAc...) asparagine glycans are attached at residues Asn80 and Asn106. LDL-receptor class B repeat units lie at residues 119–166 (RNLF…DVCR), 167–211 (RKLY…DQLS), and 212–257 (DRIF…TNDA). N-linked (GlcNAc...) asparagine glycosylation occurs at Asn175. Asn316 carries an N-linked (GlcNAc...) asparagine glycan. 2 consecutive EGF-like domains span residues 365-401 (DEKTAQLERDHCLNGGTYIADRVLCICPTGFKGSRCE) and 436-473 (EISKCSGLCLNGGHCKLEDISEKPSCECPHNFAGERCE). Disulfide bonds link Cys376/Cys389, Cys391/Cys400, Cys440/Cys450, Cys444/Cys461, and Cys463/Cys472. An N-linked (GlcNAc...) asparagine glycan is attached at Asn475. The chain crosses the membrane as a helical span at residues 535–555 (VIIVLVLGIVSCFFLVAVIVH). Residues 556-647 (GFRRLYKPKR…LIHNMDDDLY (92 aa)) are Cytoplasmic-facing.

It belongs to the cueball family.

It localises to the cell membrane. Functionally, has a role in spermatogenesis and oogenesis. This is Protein cueball from Drosophila pseudoobscura pseudoobscura (Fruit fly).